Consider the following 317-residue polypeptide: Acetyl-coenzyme A carboxylase carboxyl transferase subunit alpha (317 aa).

Positions 40-293 constitute a CoA carboxyltransferase C-terminal domain; it reads LEVRVREAIV…GDVIANALGE (254 aa).

This sequence belongs to the AccA family. In terms of assembly, acetyl-CoA carboxylase is a heterohexamer composed of biotin carboxyl carrier protein (AccB), biotin carboxylase (AccC) and two subunits each of ACCase subunit alpha (AccA) and ACCase subunit beta (AccD).

The protein resides in the cytoplasm. The enzyme catalyses N(6)-carboxybiotinyl-L-lysyl-[protein] + acetyl-CoA = N(6)-biotinyl-L-lysyl-[protein] + malonyl-CoA. It participates in lipid metabolism; malonyl-CoA biosynthesis; malonyl-CoA from acetyl-CoA: step 1/1. Component of the acetyl coenzyme A carboxylase (ACC) complex. First, biotin carboxylase catalyzes the carboxylation of biotin on its carrier protein (BCCP) and then the CO(2) group is transferred by the carboxyltransferase to acetyl-CoA to form malonyl-CoA. The sequence is that of Acetyl-coenzyme A carboxylase carboxyl transferase subunit alpha from Rhizobium etli (strain ATCC 51251 / DSM 11541 / JCM 21823 / NBRC 15573 / CFN 42).